The primary structure comprises 793 residues: Probable phosphoketolase (793 aa).

This sequence belongs to the XFP family. Thiamine diphosphate is required as a cofactor.

The chain is Probable phosphoketolase from Rhodopirellula baltica (strain DSM 10527 / NCIMB 13988 / SH1).